Consider the following 115-residue polypeptide: Large ribosomal subunit protein bL20 (115 aa).

This sequence belongs to the bacterial ribosomal protein bL20 family.

Functionally, binds directly to 23S ribosomal RNA and is necessary for the in vitro assembly process of the 50S ribosomal subunit. It is not involved in the protein synthesizing functions of that subunit. The polypeptide is Large ribosomal subunit protein bL20 (Cytophaga hutchinsonii (strain ATCC 33406 / DSM 1761 / CIP 103989 / NBRC 15051 / NCIMB 9469 / D465)).